Here is a 503-residue protein sequence, read N- to C-terminus: Arabinose import ATP-binding protein AraG 1 (503 aa).

ABC transporter domains are found at residues L5–R240 and R251–T497. Residue G37 to S44 coordinates ATP.

The protein belongs to the ABC transporter superfamily. Arabinose importer (TC 3.A.1.2.2) family. As to quaternary structure, the complex is composed of two ATP-binding proteins (AraG), two transmembrane proteins (AraH) and a solute-binding protein (AraF).

Its subcellular location is the cell inner membrane. It catalyses the reaction L-arabinose(out) + ATP + H2O = L-arabinose(in) + ADP + phosphate + H(+). Functionally, part of the ABC transporter complex AraFGH involved in arabinose import. Responsible for energy coupling to the transport system. The protein is Arabinose import ATP-binding protein AraG 1 of Burkholderia cenocepacia (strain HI2424).